The sequence spans 140 residues: 3-hydroxyacyl-[acyl-carrier-protein] dehydratase FabZ (140 aa).

The active site involves histidine 47.

Belongs to the thioester dehydratase family. FabZ subfamily.

It localises to the cytoplasm. It carries out the reaction a (3R)-hydroxyacyl-[ACP] = a (2E)-enoyl-[ACP] + H2O. In terms of biological role, involved in unsaturated fatty acids biosynthesis. Catalyzes the dehydration of short chain beta-hydroxyacyl-ACPs and long chain saturated and unsaturated beta-hydroxyacyl-ACPs. The chain is 3-hydroxyacyl-[acyl-carrier-protein] dehydratase FabZ from Streptococcus suis (strain 98HAH33).